The sequence spans 20 residues: Unknown protein NF009 from 2D-PAGE (20 aa).

The interval 1–20 (ATSAAQGAALDESVRKVLKP) is disordered.

This Naegleria fowleri (Brain eating amoeba) protein is Unknown protein NF009 from 2D-PAGE.